The chain runs to 177 residues: uncharacterized protein (177 aa).

4 helical membrane-spanning segments follow: residues 20–42 (NLVSYAVGGILAIAGYVLILLAL), 62–84 (VVLWIIAVLIVIFAVGISFVSLS), 94–116 (AMSSFLVGVILFYILSVIGGYFI), and 136–158 (GLLYFIGTLLLIVIVGIIVIIVA).

It is found in the cell membrane. This is an uncharacterized protein from Methanocaldococcus jannaschii (strain ATCC 43067 / DSM 2661 / JAL-1 / JCM 10045 / NBRC 100440) (Methanococcus jannaschii).